A 769-amino-acid chain; its full sequence is Homoaconitase, mitochondrial (769 aa).

Residues 1-28 (MQSRLLPSGPGRRWISLRVPNTPQRRAF) constitute a mitochondrion transit peptide. [4Fe-4S] cluster contacts are provided by C391, C460, and C463.

The protein belongs to the aconitase/IPM isomerase family. [4Fe-4S] cluster is required as a cofactor.

Its subcellular location is the mitochondrion. It catalyses the reaction (2R,3S)-homoisocitrate = cis-homoaconitate + H2O. It participates in amino-acid biosynthesis; L-lysine biosynthesis via AAA pathway; L-alpha-aminoadipate from 2-oxoglutarate: step 3/5. Functionally, catalyzes the reversible hydration of cis-homoaconitate to (2R,3S)-homoisocitrate, a step in the alpha-aminoadipate pathway for lysine biosynthesis. The sequence is that of Homoaconitase, mitochondrial (lysA) from Aspergillus niger (strain ATCC MYA-4892 / CBS 513.88 / FGSC A1513).